The chain runs to 274 residues: NH(3)-dependent NAD(+) synthetase (274 aa).

Residue 46–53 (GISGGQDS) participates in ATP binding. Asp-52 contributes to the Mg(2+) binding site. Position 140 (Arg-140) interacts with deamido-NAD(+). ATP is bound at residue Thr-160. Glu-165 lines the Mg(2+) pocket. Deamido-NAD(+) contacts are provided by Lys-173 and Asp-180. The ATP site is built by Lys-189 and Thr-211. Residue 260–261 (HK) participates in deamido-NAD(+) binding.

The protein belongs to the NAD synthetase family. As to quaternary structure, homodimer.

The catalysed reaction is deamido-NAD(+) + NH4(+) + ATP = AMP + diphosphate + NAD(+) + H(+). It functions in the pathway cofactor biosynthesis; NAD(+) biosynthesis; NAD(+) from deamido-NAD(+) (ammonia route): step 1/1. Its function is as follows. Catalyzes the ATP-dependent amidation of deamido-NAD to form NAD. Uses ammonia as a nitrogen source. In Lactococcus lactis subsp. cremoris (strain MG1363), this protein is NH(3)-dependent NAD(+) synthetase.